Consider the following 186-residue polypeptide: uncharacterized protein (186 aa).

The next 4 membrane-spanning stretches (helical) occupy residues 5–25 (LIACLIINNLTLIHFVGFEDI), 39–59 (IITITSLLIYSISFYLYKLFA), 62–82 (NLLFLVPIFYVILIYVLILLF), and 122–142 (GFFEGLEILILSALGILIALM).

It is found in the cell membrane. This is an uncharacterized protein from Borreliella burgdorferi (strain ATCC 35210 / DSM 4680 / CIP 102532 / B31) (Borrelia burgdorferi).